The following is a 165-amino-acid chain: Type 3 secretion system regulator YopR (165 aa).

The protein belongs to the YopR family.

Its subcellular location is the secreted. Its function is as follows. May be involved in the regulation of the assembly of the type III secretion system (T3SS), also called injectisome, which is used to inject bacterial effector proteins into eukaryotic host cells. May control the secretion and/or polymerization of YscF/SctF, the principal component of the needle filament, thereby impacting the assembly of the T3SS. Involved in pathogenesis. The chain is Type 3 secretion system regulator YopR from Yersinia pestis.